A 292-amino-acid polypeptide reads, in one-letter code: T-box transcription factor tbx-9 (292 aa).

The T-box DNA-binding region spans 10-194 (GSQETLWKIF…HNSFAKGFRD (185 aa)). Disordered stretches follow at residues 192-227 (FRDGNLSRKRRSPSYSDGSNSQSPSPKSRSPPEVAP) and 265-292 (STPSSSSSELSIVKEEDQEVEEDIDIVG). Low complexity-rich tracts occupy residues 204–223 (PSYSDGSNSQSPSPKSRSPP) and 265–275 (STPSSSSSELS). The span at 280-292 (EDQEVEEDIDIVG) shows a compositional bias: acidic residues.

It is found in the nucleus. Transcription factor. Involved in the control of early morphogenesis of the intestine, hypodermis and body-wall muscle. Involved in regulating expression of vab-7. Appears to have partially redundant function to tbx-8. Positively modulates expression of homeobox protein lin-39, perhaps by binding to regulatory regions of the lin-39 gene, acting in the vulval lineage. The protein is T-box transcription factor tbx-9 (tbx-9) of Caenorhabditis elegans.